The chain runs to 363 residues: GTP-binding protein 1 (363 aa).

Residues 63 to 287 (ARVAFIGFPS…LKERIWEELN (225 aa)) form the OBG-type G domain. Residues 69–76 (GFPSVGKS), 115–119 (DLPGI), and 246–249 (KIDA) contribute to the GTP site. One can recognise a TGS domain in the interval 287 to 362 (NLYRIYTKRK…EEGDVVTIVT (76 aa)).

It belongs to the TRAFAC class OBG-HflX-like GTPase superfamily. OBG GTPase family.

The sequence is that of GTP-binding protein 1 (gtp1) from Schizosaccharomyces pombe (strain 972 / ATCC 24843) (Fission yeast).